The sequence spans 80 residues: Calmodulin (80 aa).

EF-hand domains are found at residues 12–47 and 48–80; these read DSEEEIREAFRVFDKDGNGFISAAELRHVMTNLGEK and LTDEEVDEMIREADIDGDGQVNYEEFVAMMTSK. 9 residues coordinate Ca(2+): Asp-25, Asp-27, Asn-29, Glu-36, Asp-61, Asp-63, Asp-65, Gln-67, and Glu-72.

Belongs to the calmodulin family.

Functionally, calmodulin mediates the control of a large number of enzymes, ion channels and other proteins by Ca(2+). Among the enzymes to be stimulated by the calmodulin-Ca(2+) complex are a number of protein kinases and phosphatases. The chain is Calmodulin from Strongylocentrotus purpuratus (Purple sea urchin).